The sequence spans 597 residues: Probable translation initiation factor IF-2 (597 aa).

Residues 8–225 (LRQPIVVVLG…LLAGLTQQYL (218 aa)) form the tr-type G domain. Positions 17–24 (GHVDHGKT) are G1. 17-24 (GHVDHGKT) serves as a coordination point for GTP. The tract at residues 42-46 (EMTQE) is G2. The segment at 81–84 (DTPG) is G3. GTP contacts are provided by residues 81 to 85 (DTPGH) and 135 to 138 (NKID). A G4 region spans residues 135–138 (NKID). The interval 203–205 (SGK) is G5.

Belongs to the TRAFAC class translation factor GTPase superfamily. Classic translation factor GTPase family. IF-2 subfamily.

Its function is as follows. Function in general translation initiation by promoting the binding of the formylmethionine-tRNA to ribosomes. Seems to function along with eIF-2. The chain is Probable translation initiation factor IF-2 from Metallosphaera sedula (strain ATCC 51363 / DSM 5348 / JCM 9185 / NBRC 15509 / TH2).